The sequence spans 359 residues: MVRVCRVVPKDWSKFQPVGNVIPRTRFIVFKTPINSQLSTKIHKEQRFTTNDLFRQLSERGQYLGLVVDLSDTDRYYDKKDITGMCVQYEKVNCPGRGFIERDDCVESFHQVIQDYTDKCDDPDALIGVHCTNGINRCGYLICRFLIDRLGWSSHEAIDAFEQARGYSIEKGAYVMALHKAAKDKRDKQVDSDSDSSERQRKKKNKRKHREIVEHENIVLINTIIGELGSQAASVSGTDYQNSPNGVSVDPGQPQPHHWGFAIKRSKYAQLNQPVANGANTPPEPSEGTPQEEEEFEEDFEEIEEETETEPGKGQSVSSKRRARRNRMQKYMQVMQRGRFHEIQAIREEVALSHGSARD.

In terms of domain architecture, Tyrosine-protein phosphatase spans Q16 to D191. Residue C131 is the Phosphocysteine intermediate of the active site. Residues D184 to R199 are compositionally biased toward basic and acidic residues. Disordered stretches follow at residues D184–E211, S234–W259, and P274–M328. Positions Q200–R210 are enriched in basic residues. Residues S234–G246 show a composition bias toward polar residues. Residues P290–T309 show a composition bias toward acidic residues. The span at S319 to M328 shows a compositional bias: basic residues.

Belongs to the protein-tyrosine phosphatase family. Non-receptor class CDC14 subfamily.

It catalyses the reaction O-phospho-L-tyrosyl-[protein] + H2O = L-tyrosyl-[protein] + phosphate. The sequence is that of Probable tyrosine-protein phosphatase pir-2 from Caenorhabditis elegans.